Here is a 342-residue protein sequence, read N- to C-terminus: Phosphatidate cytidylyltransferase, mitochondrial (342 aa).

The protein belongs to the TAM41 family. Mg(2+) serves as cofactor. Co(2+) is required as a cofactor. It depends on Cu(2+) as a cofactor.

Its subcellular location is the mitochondrion inner membrane. It catalyses the reaction a 1,2-diacyl-sn-glycero-3-phosphate + CTP + H(+) = a CDP-1,2-diacyl-sn-glycerol + diphosphate. It participates in phospholipid metabolism; CDP-diacylglycerol biosynthesis; CDP-diacylglycerol from sn-glycerol 3-phosphate: step 3/3. Catalyzes the formation of CDP-diacylglycerol (CDP-DAG) from phosphatidic acid (PA) in the mitochondrial inner membrane. Required for the biosynthesis of the dimeric phospholipid cardiolipin, which stabilizes supercomplexes of the mitochondrial respiratory chain in the mitochondrial inner membrane. This is Phosphatidate cytidylyltransferase, mitochondrial from Drosophila melanogaster (Fruit fly).